The sequence spans 127 residues: Fluoride-specific ion channel FluC (127 aa).

Transmembrane regions (helical) follow at residues 4–24 (FSIL…RYLV), 38–58 (YGTL…IAAF), 71–91 (VIGL…MDNV), and 104–124 (LNIL…FQLL). The Na(+) site is built by G78 and T81.

This sequence belongs to the fluoride channel Fluc/FEX (TC 1.A.43) family.

The protein resides in the cell inner membrane. The enzyme catalyses fluoride(in) = fluoride(out). Na(+) is not transported, but it plays an essential structural role and its presence is essential for fluoride channel function. Its function is as follows. Fluoride-specific ion channel. Important for reducing fluoride concentration in the cell, thus reducing its toxicity. The sequence is that of Fluoride-specific ion channel FluC from Vibrio parahaemolyticus serotype O3:K6 (strain RIMD 2210633).